A 456-amino-acid chain; its full sequence is Chromosomal replication initiator protein DnaA 1 (456 aa).

Residues 1-68 (MRAWEEFLLL…KASLINNNGK (68 aa)) form a domain I, interacts with DnaA modulators region. Residues 68–101 (KPIRVRVTSLDKSTPFKETQIQQEKTAYFTMKYG) are domain II. The segment at 102–320 (DIDPNMSFAN…HALTTLAKRV (219 aa)) is domain III, AAA+ region. ATP is bound by residues S150, G152, K153, and T154. Residues 321 to 456 (AYKKLSHQML…AYQSLDFIED (136 aa)) are domain IV, binds dsDNA.

It belongs to the DnaA family. In terms of assembly, oligomerizes as a right-handed, spiral filament on DNA at oriC.

It is found in the cytoplasm. In terms of biological role, plays an essential role in the initiation and regulation of chromosomal replication. ATP-DnaA binds to the origin of replication (oriC) to initiate formation of the DNA replication initiation complex once per cell cycle. Binds the DnaA box (a 9 base pair repeat at the origin) and separates the double-stranded (ds)DNA. Forms a right-handed helical filament on oriC DNA; dsDNA binds to the exterior of the filament while single-stranded (ss)DNA is stabiized in the filament's interior. The ATP-DnaA-oriC complex binds and stabilizes one strand of the AT-rich DNA unwinding element (DUE), permitting loading of DNA polymerase. After initiation quickly degrades to an ADP-DnaA complex that is not apt for DNA replication. Binds acidic phospholipids. The sequence is that of Chromosomal replication initiator protein DnaA 1 from Chlamydia trachomatis serovar D (strain ATCC VR-885 / DSM 19411 / UW-3/Cx).